The sequence spans 667 residues: Trifunctional UDP-glucose 4,6-dehydratase/UDP-4-keto-6-deoxy-D-glucose 3,5-epimerase/UDP-4-keto-L-rhamnose-reductase RHM2 (667 aa).

15-21 (GAAGFIA) contributes to the NAD(+) binding site. Thr134 contributes to the substrate binding site. The active-site Proton donor is the Asp135. Residues Glu136 and Tyr161 each act as proton acceptor in the active site. Position 389–395 (389–395 (GKTGWLG)) interacts with NADP(+).

In the N-terminal section; belongs to the NAD(P)-dependent epimerase/dehydratase family. dTDP-glucose dehydratase subfamily. This sequence in the C-terminal section; belongs to the dTDP-4-dehydrorhamnose reductase family. It depends on NAD(+) as a cofactor. Requires NADP(+) as cofactor. In terms of tissue distribution, expressed in roots, stems, leaves, seedlings, inflorescence tips, and siliques.

The enzyme catalyses UDP-alpha-D-glucose = UDP-4-dehydro-6-deoxy-alpha-D-glucose + H2O. Its pathway is carbohydrate biosynthesis. Functionally, trifunctional enzyme involved in UDP-beta-L-rhamnose biosynthesis, a precursor of the primary cell wall components rhamnogalacturonan I (RG-I) and rhamnogalacturonan II (RG-II). Catalyzes the dehydration of UDP-glucose to form UDP-4-dehydro-6-deoxy-D-glucose followed by the epimerization of the C3' and C5' positions of UDP-4-dehydro-6-deoxy-D-glucose to form UDP-4-keto-beta-L-rhamnose and the reduction of UDP-4-keto-beta-L-rhamnose to yield UDP-beta-L-rhamnose. Required for the normal seed coat epidermal development. In Arabidopsis thaliana (Mouse-ear cress), this protein is Trifunctional UDP-glucose 4,6-dehydratase/UDP-4-keto-6-deoxy-D-glucose 3,5-epimerase/UDP-4-keto-L-rhamnose-reductase RHM2.